Here is a 302-residue protein sequence, read N- to C-terminus: Recombination-associated protein RdgC (302 aa).

This sequence belongs to the RdgC family.

It is found in the cytoplasm. The protein resides in the nucleoid. Its function is as follows. May be involved in recombination. The chain is Recombination-associated protein RdgC from Proteus mirabilis (strain HI4320).